A 578-amino-acid chain; its full sequence is Membrane protein insertase YidC (578 aa).

Residues I3–W23 traverse the membrane as a helical segment. Positions A34–D72 are disordered. A compositionally biased stretch (polar residues) spans A37 to A66. 5 helical membrane-spanning segments follow: residues L361–L381, L387–F407, L457–L477, P500–P520, and P535–V555.

It belongs to the OXA1/ALB3/YidC family. Type 1 subfamily. Interacts with the Sec translocase complex via SecD. Specifically interacts with transmembrane segments of nascent integral membrane proteins during membrane integration.

The protein resides in the cell inner membrane. Functionally, required for the insertion and/or proper folding and/or complex formation of integral membrane proteins into the membrane. Involved in integration of membrane proteins that insert both dependently and independently of the Sec translocase complex, as well as at least some lipoproteins. Aids folding of multispanning membrane proteins. In Pseudomonas aeruginosa (strain LESB58), this protein is Membrane protein insertase YidC.